The sequence spans 129 residues: uncharacterized protein (129 aa).

This is an uncharacterized protein from Haemophilus influenzae (strain ATCC 51907 / DSM 11121 / KW20 / Rd).